Reading from the N-terminus, the 258-residue chain is Exu regulon transcriptional regulator (258 aa).

The region spanning 7–75 (RRLYQQLAAD…KGSGIHVVSN (69 aa)) is the HTH gntR-type domain. A DNA-binding region (H-T-H motif) is located at residues 35–54 (ERFIADEKNVSRTVVREAII).

Its function is as follows. Repressor for the exu regulon that encode genes involved in hexuronate utilization. It regulates the ExuT, UxaCA and UxuRAB operons. Binds D-tagaturonate and D-fructuronate as inducers. The sequence is that of Exu regulon transcriptional regulator (exuR) from Escherichia coli O157:H7.